The following is a 149-amino-acid chain: Myoglobin (149 aa).

N-acetylalanine is present on Ala-2. Residues 2-143 enclose the Globin domain; it reads ADWDKVNSVW…ICSDIEKEYK (142 aa). His-89 is a heme b binding site.

The protein belongs to the globin family. As to quaternary structure, monomeric.

The protein resides in the cytoplasm. It localises to the sarcoplasm. The enzyme catalyses Fe(III)-heme b-[protein] + nitric oxide + H2O = Fe(II)-heme b-[protein] + nitrite + 2 H(+). It carries out the reaction H2O2 + AH2 = A + 2 H2O. Its function is as follows. Monomeric heme protein which primary function is to store oxygen and facilitate its diffusion within muscle tissues. Reversibly binds oxygen through a pentacoordinated heme iron and enables its timely and efficient release as needed during periods of heightened demand. Depending on the oxidative conditions of tissues and cells, and in addition to its ability to bind oxygen, it also has a nitrite reductase activity whereby it regulates the production of bioactive nitric oxide. Under stress conditions, like hypoxia and anoxia, it also protects cells against reactive oxygen species thanks to its pseudoperoxidase activity. The protein is Myoglobin (mb) of Galeorhinus galeus (Tope shark).